Reading from the N-terminus, the 180-residue chain is MVKESIPKEGQTIKIQSYKHDGNIHRVWSETTILKGTEHVVIGGNDHTLVTESDSRTWITREPAIVYFHSEFWFNVICMFREDGVYYYCNLSSPFVCDDEALKYIDYDLDIKVYPNGKYHLLDEDEYEQHMRQMNYSSDIDVILRRNVDILQQWIEQKKGPFAPDFIKVWRERYKKIRNY.

Arg26 (proton donor) is an active-site residue. Mg(2+) contacts are provided by Asn90, Asp106, Asp108, Asp110, Asp123, and Glu126.

The protein belongs to the Ntdp family. It depends on Mg(2+) as a cofactor.

It carries out the reaction a ribonucleoside 5'-triphosphate + H2O = a ribonucleoside 5'-diphosphate + phosphate + H(+). It catalyses the reaction a ribonucleoside 5'-diphosphate + H2O = a ribonucleoside 5'-phosphate + phosphate + H(+). Functionally, has nucleoside phosphatase activity towards nucleoside triphosphates and nucleoside diphosphates. The sequence is that of Nucleoside triphosphate/diphosphate phosphatase from Staphylococcus saprophyticus subsp. saprophyticus (strain ATCC 15305 / DSM 20229 / NCIMB 8711 / NCTC 7292 / S-41).